Reading from the N-terminus, the 665-residue chain is Kinesin-like protein KIF22 (665 aa).

Positions 43–368 (RVRVAVRLRP…LNFAARSKEV (326 aa)) constitute a Kinesin motor domain. 127 to 134 (GPTGAGKT) is a binding site for ATP. Residues 379–428 (QPHALGPVKLSQKELLGPPEAKRARGPEEEEIGSPEPMAAPASASQKLSP) form a disordered region. Phosphoserine occurs at positions 412, 427, and 452. Residues 412-428 (SPEPMAAPASASQKLSP) show a composition bias toward low complexity. K465 is covalently cross-linked (Glycyl lysine isopeptide (Lys-Gly) (interchain with G-Cter in SUMO2)). A coiled-coil region spans residues 465–508 (KRERMVLMKTVEEKDLEIERLKTKQKELEAKMLAQKAEEKENHC). 3 positions are modified to phosphoserine: S543, S562, and S581.

Belongs to the TRAFAC class myosin-kinesin ATPase superfamily. Kinesin family. In terms of assembly, interacts with FAM83D. Interacts with SIAH1. In terms of processing, ubiquitinated; mediated by SIAH1 and leading to its subsequent proteasomal degradation. Expressed in bone, cartilage, joint capsule, ligament, skin, and primary cultured chondrocytes.

The protein localises to the nucleus. It is found in the cytoplasm. The protein resides in the cytoskeleton. Kinesin family member that is involved in spindle formation and the movements of chromosomes during mitosis and meiosis. Binds to microtubules and to DNA. Plays a role in congression of laterally attached chromosomes in NDC80-depleted cells. This Homo sapiens (Human) protein is Kinesin-like protein KIF22 (KIF22).